The sequence spans 409 residues: Protein naked cuticle homolog 2-like (409 aa).

Residue Gly-2 is the site of N-myristoyl glycine attachment. Residues Ala-109–Val-144 form the EF-hand domain. Ca(2+) is bound by residues Asp-122, Asp-124, Ser-126, Lys-128, and Asp-133. 4 disordered regions span residues Val-166–Asp-224, Thr-243–Gly-315, Asn-346–Arg-367, and Arg-388–Thr-409. Basic and acidic residues-rich tracts occupy residues Ala-171 to Ser-185 and Val-193 to Asp-224. The segment covering Asp-247–Pro-268 has biased composition (low complexity). A compositionally biased stretch (basic residues) spans His-389–Thr-409.

This sequence belongs to the NKD family.

It localises to the cell membrane. The protein localises to the cytoplasm. In terms of biological role, cell autonomous antagonist of both the canonical and non-canonical Wnt signaling pathways. The polypeptide is Protein naked cuticle homolog 2-like (nkd2l) (Danio rerio (Zebrafish)).